A 438-amino-acid chain; its full sequence is uncharacterized protein (438 aa).

His-59 is a Zn(2+) binding site. Glu-62 acts as the Proton acceptor in catalysis. Positions 63 and 139 each coordinate Zn(2+).

The protein belongs to the peptidase M16 family. It depends on Zn(2+) as a cofactor.

This is an uncharacterized protein from Mycobacterium tuberculosis (strain CDC 1551 / Oshkosh).